The following is a 1571-amino-acid chain: Pentafunctional AROM polypeptide (1571 aa).

A 3-dehydroquinate synthase region spans residues 1 to 384; it reads MEQPTTIQIL…HEQKASVVSN (384 aa). Residues 44–46, 81–84, 114–116, and Asp-119 contribute to the NAD(+) site; these read DTN, ESSK, and GGV. Residue Arg-130 participates in 7-phospho-2-dehydro-3-deoxy-D-arabino-heptonate binding. Position 139–140 (139–140) interacts with NAD(+); that stretch reads TT. 7-phospho-2-dehydro-3-deoxy-D-arabino-heptonate is bound by residues Asp-146 and Lys-152. Lys-161 is a binding site for NAD(+). Asn-162 provides a ligand contact to 7-phospho-2-dehydro-3-deoxy-D-arabino-heptonate. NAD(+)-binding positions include 179-182 and Asn-190; that span reads FLNT. Glu-194 lines the Zn(2+) pocket. 7-phospho-2-dehydro-3-deoxy-D-arabino-heptonate-binding positions include 194 to 197 and Lys-250; that span reads EVIK. Residue Glu-260 is the Proton acceptor; for 3-dehydroquinate synthase activity of the active site. 7-phospho-2-dehydro-3-deoxy-D-arabino-heptonate-binding positions include 264–268 and His-271; that span reads RNLLN. A Zn(2+)-binding site is contributed by His-271. Residue His-275 is the Proton acceptor; for 3-dehydroquinate synthase activity of the active site. His-287 and Lys-356 together coordinate 7-phospho-2-dehydro-3-deoxy-D-arabino-heptonate. Residue His-287 participates in Zn(2+) binding. The tract at residues 397-843 is EPSP synthase; the sequence is VLPGIPKPLN…WDALAQTFKV (447 aa). Catalysis depends on Cys-825, which acts as the For EPSP synthase activity. A shikimate kinase region spans residues 866 to 1057; that stretch reads ASIFIIGMRG…KKKDHSFFVS (192 aa). Residue 872 to 879 coordinates ATP; the sequence is GMRGAGKT. The tract at residues 1058–1278 is 3-dehydroquinase; that stretch reads LTLPDLQLSA…AAPGQVSAKD (221 aa). The active-site Proton acceptor; for 3-dehydroquinate dehydratase activity is His-1181. Catalysis depends on Lys-1209, which acts as the Schiff-base intermediate with substrate; for 3-dehydroquinate dehydratase activity. The segment at 1291 to 1571 is shikimate dehydrogenase; the sequence is AKKFALFGKP…EDARAAVMNI (281 aa).

In the N-terminal section; belongs to the sugar phosphate cyclases superfamily. Dehydroquinate synthase family. This sequence in the 2nd section; belongs to the EPSP synthase family. The protein in the 3rd section; belongs to the shikimate kinase family. It in the 4th section; belongs to the type-I 3-dehydroquinase family. In the C-terminal section; belongs to the shikimate dehydrogenase family. As to quaternary structure, homodimer. Requires Zn(2+) as cofactor.

It localises to the cytoplasm. It catalyses the reaction 7-phospho-2-dehydro-3-deoxy-D-arabino-heptonate = 3-dehydroquinate + phosphate. It carries out the reaction 3-dehydroquinate = 3-dehydroshikimate + H2O. The enzyme catalyses shikimate + NADP(+) = 3-dehydroshikimate + NADPH + H(+). The catalysed reaction is shikimate + ATP = 3-phosphoshikimate + ADP + H(+). It catalyses the reaction 3-phosphoshikimate + phosphoenolpyruvate = 5-O-(1-carboxyvinyl)-3-phosphoshikimate + phosphate. The protein operates within metabolic intermediate biosynthesis; chorismate biosynthesis; chorismate from D-erythrose 4-phosphate and phosphoenolpyruvate: step 2/7. Its pathway is metabolic intermediate biosynthesis; chorismate biosynthesis; chorismate from D-erythrose 4-phosphate and phosphoenolpyruvate: step 3/7. It functions in the pathway metabolic intermediate biosynthesis; chorismate biosynthesis; chorismate from D-erythrose 4-phosphate and phosphoenolpyruvate: step 4/7. It participates in metabolic intermediate biosynthesis; chorismate biosynthesis; chorismate from D-erythrose 4-phosphate and phosphoenolpyruvate: step 5/7. The protein operates within metabolic intermediate biosynthesis; chorismate biosynthesis; chorismate from D-erythrose 4-phosphate and phosphoenolpyruvate: step 6/7. The AROM polypeptide catalyzes 5 consecutive enzymatic reactions in prechorismate polyaromatic amino acid biosynthesis. The chain is Pentafunctional AROM polypeptide from Arthroderma otae (strain ATCC MYA-4605 / CBS 113480) (Microsporum canis).